Consider the following 95-residue polypeptide: Aspartyl/glutamyl-tRNA(Asn/Gln) amidotransferase subunit C (95 aa).

This sequence belongs to the GatC family. Heterotrimer of A, B and C subunits.

The catalysed reaction is L-glutamyl-tRNA(Gln) + L-glutamine + ATP + H2O = L-glutaminyl-tRNA(Gln) + L-glutamate + ADP + phosphate + H(+). The enzyme catalyses L-aspartyl-tRNA(Asn) + L-glutamine + ATP + H2O = L-asparaginyl-tRNA(Asn) + L-glutamate + ADP + phosphate + 2 H(+). Allows the formation of correctly charged Asn-tRNA(Asn) or Gln-tRNA(Gln) through the transamidation of misacylated Asp-tRNA(Asn) or Glu-tRNA(Gln) in organisms which lack either or both of asparaginyl-tRNA or glutaminyl-tRNA synthetases. The reaction takes place in the presence of glutamine and ATP through an activated phospho-Asp-tRNA(Asn) or phospho-Glu-tRNA(Gln). In Pseudomonas fluorescens (strain ATCC BAA-477 / NRRL B-23932 / Pf-5), this protein is Aspartyl/glutamyl-tRNA(Asn/Gln) amidotransferase subunit C.